Reading from the N-terminus, the 341-residue chain is Glycerol-3-phosphate dehydrogenase [NAD(P)+] (341 aa).

Residues Ser-12, Trp-13, Arg-33, and Lys-107 each contribute to the NADPH site. Sn-glycerol 3-phosphate contacts are provided by Lys-107, Gly-134, and Thr-136. Ala-138 lines the NADPH pocket. Lys-189, Asp-242, Ser-252, Arg-253, and Asn-254 together coordinate sn-glycerol 3-phosphate. Catalysis depends on Lys-189, which acts as the Proton acceptor. Arg-253 provides a ligand contact to NADPH. Residues Val-277 and Glu-279 each contribute to the NADPH site.

It belongs to the NAD-dependent glycerol-3-phosphate dehydrogenase family.

The protein localises to the cytoplasm. It catalyses the reaction sn-glycerol 3-phosphate + NAD(+) = dihydroxyacetone phosphate + NADH + H(+). The enzyme catalyses sn-glycerol 3-phosphate + NADP(+) = dihydroxyacetone phosphate + NADPH + H(+). Its pathway is membrane lipid metabolism; glycerophospholipid metabolism. In terms of biological role, catalyzes the reduction of the glycolytic intermediate dihydroxyacetone phosphate (DHAP) to sn-glycerol 3-phosphate (G3P), the key precursor for phospholipid synthesis. This is Glycerol-3-phosphate dehydrogenase [NAD(P)+] from Halothermothrix orenii (strain H 168 / OCM 544 / DSM 9562).